A 468-amino-acid chain; its full sequence is Ribosomal protein uS12 methylthiotransferase RimO (468 aa).

An MTTase N-terminal domain is found at 18–129 (PTVAFAHLGC…IVEVLERVEA (112 aa)). 6 residues coordinate [4Fe-4S] cluster: C27, C63, C92, C167, C171, and C174. A Radical SAM core domain is found at 153 to 382 (TTGEAVAYLK…MTLQQPISAA (230 aa)). The TRAM domain occupies 385-456 (ARWVGRTVDA…IYDLRAEIVG (72 aa)).

It belongs to the methylthiotransferase family. RimO subfamily. The cofactor is [4Fe-4S] cluster.

The protein resides in the cytoplasm. The enzyme catalyses L-aspartate(89)-[ribosomal protein uS12]-hydrogen + (sulfur carrier)-SH + AH2 + 2 S-adenosyl-L-methionine = 3-methylsulfanyl-L-aspartate(89)-[ribosomal protein uS12]-hydrogen + (sulfur carrier)-H + 5'-deoxyadenosine + L-methionine + A + S-adenosyl-L-homocysteine + 2 H(+). Its function is as follows. Catalyzes the methylthiolation of an aspartic acid residue of ribosomal protein uS12. This Synechococcus sp. (strain WH7803) protein is Ribosomal protein uS12 methylthiotransferase RimO.